The chain runs to 1448 residues: DNA primase TraC (1448 aa).

Composition is skewed to basic and acidic residues over residues 844-856 (ARVQ…RDPN), 863-872 (SAAKEARKTA), and 882-898 (DAQR…RDRQ). 2 disordered regions span residues 844 to 915 (ARVQ…INVP) and 952 to 982 (QGAA…QQAQ). Residues 964–982 (AQPAPEAQGEAQKPAQQAQ) show a composition bias toward low complexity. A Toprim domain is found at 1237–1325 (PALVISEGYA…GKAIFPIFAP (89 aa)). A disordered region spans residues 1414 to 1448 (ISQVQRDEQQHQEQKHVEKKQQQIEQRPRRAARIG). Positions 1418 to 1441 (QRDEQQHQEQKHVEKKQQQIEQRP) are enriched in basic and acidic residues.

Functionally, required for autonomous replication in E.coli. Transferred into the recipient cell during bacterial conjugation. Catalyzes the synthesis of short oligoribonucleotide primers with CpA or pCpA at their 5'-termini on a single-stranded template DNA. This is DNA primase TraC (traC) from Escherichia coli.